The primary structure comprises 295 residues: Biliverdin reductase A (295 aa).

Positions 1–2 (MS) are excised as a propeptide. NAD(+) is bound by residues 18 to 19 (RA), 76 to 79 (SSSH), and Y97. S154 is modified (phosphoserine). S167 contributes to the NAD(+) binding site. Phosphothreonine is present on T173. Phosphoserine is present on residues S177 and S229. An N6-acetyllysine mark is found at K247 and K252. 4 residues coordinate Zn(2+): H279, C280, C291, and H292.

The protein belongs to the Gfo/Idh/MocA family. Biliverdin reductase subfamily. As to quaternary structure, monomer. The cofactor is Zn(2+).

It is found in the cytoplasm. Its subcellular location is the cytosol. The enzyme catalyses (4Z,15Z)-bilirubin IXalpha + NAD(+) = biliverdin IXalpha + NADH + H(+). It catalyses the reaction (4Z,15Z)-bilirubin IXalpha + NADP(+) = biliverdin IXalpha + NADPH + H(+). It participates in porphyrin-containing compound metabolism; protoheme degradation. Functionally, reduces the gamma-methene bridge of the open tetrapyrrole, biliverdin IXalpha, to bilirubin with the concomitant oxidation of a NADH or NADPH cofactor. Does not reduce bilirubin IXbeta. Uses the reactants NADH or NADPH depending on the pH; NADH is used at the acidic pH range (6-6.9) and NADPH at the alkaline range (8.5-8.7). NADPH, however, is the probable reactant in biological systems. This Mus musculus (Mouse) protein is Biliverdin reductase A.